Consider the following 1138-residue polypeptide: Protein RECOGNITION OF PERONOSPORA PARASITICA 7 (1138 aa).

Residues 166 to 422 (EENVKKLVGY…CNYVLSLSFE (257 aa)) form the NB-ARC domain. Residue 189–196 (GMGGLGKT) participates in ATP binding. LRR repeat units lie at residues 544 to 565 (QYPT…SLVV), 566 to 581 (VTLG…FTRL), 582 to 606 (ELLR…IGKL), 607 to 631 (IHLR…NLKL), 655 to 680 (MQEL…NLVK), 681 to 705 (LETL…RLRT), 707 to 726 (TIEL…IGGL), 727 to 752 (KYLE…VFDF), 754 to 774 (HLKR…QHFP), 775 to 797 (SHLT…ILEK), 798 to 825 (LLQL…GFPQ), 847 to 871 (MPLL…HLPS), 873 to 893 (LTAI…LERL), 894 to 918 (VHLK…GFPQ), 940 to 963 (MPRL…GFPQ), 1028 to 1050 (LEKL…RMVC), 1055 to 1078 (FPQL…QGSM), 1079 to 1103 (PLLH…RFIY), and 1115 to 1138 (KKRL…EFDD).

It belongs to the disease resistance NB-LRR family.

Disease resistance protein required for incompatible interactions with avirulent strains of Hyaloperonospora arabidopsidis (downy mildew), isolate Hpa-Hiks1 in cv. Columbia. In Arabidopsis thaliana (Mouse-ear cress), this protein is Protein RECOGNITION OF PERONOSPORA PARASITICA 7.